A 491-amino-acid polypeptide reads, in one-letter code: [Pyruvate dehydrogenase (acetyl-transferring)] kinase 2, mitochondrial (491 aa).

The region spanning 153–480 (PTIRTLEDAS…DVVLKLGNLM (328 aa)) is the Histidine kinase domain. ATP contacts are provided by residues 300-307 (EILRNTYE), D341, 359-360 (SK), and 383-446 (DEVH…GIGL).

Belongs to the PDK/BCKDK protein kinase family. Interacts with PKP1.

Its subcellular location is the mitochondrion matrix. The catalysed reaction is L-seryl-[pyruvate dehydrogenase E1 alpha subunit] + ATP = O-phospho-L-seryl-[pyruvate dehydrogenase E1 alpha subunit] + ADP + H(+). Inhibits the mitochondrial pyruvate dehydrogenase complex by phosphorylation of the E1 alpha subunit (PDA1), thus contributing to the regulation of glucose metabolism. This Saccharomyces cerevisiae (strain ATCC 204508 / S288c) (Baker's yeast) protein is [Pyruvate dehydrogenase (acetyl-transferring)] kinase 2, mitochondrial.